Reading from the N-terminus, the 854-residue chain is DNA gyrase subunit A (854 aa).

A Topo IIA-type catalytic domain is found at 42 to 510 (LPEVRDGLKP…ADGQVSDEDL (469 aa)). The active-site O-(5'-phospho-DNA)-tyrosine intermediate is Y129. Residues 537 to 543 (QKRGGKG) carry the GyrA-box motif.

It belongs to the type II topoisomerase GyrA/ParC subunit family. As to quaternary structure, heterotetramer, composed of two GyrA and two GyrB chains. In the heterotetramer, GyrA contains the active site tyrosine that forms a transient covalent intermediate with DNA, while GyrB binds cofactors and catalyzes ATP hydrolysis.

It localises to the cytoplasm. It carries out the reaction ATP-dependent breakage, passage and rejoining of double-stranded DNA.. DNA supercoiling is inhibited by the coumarin antibiotic novobiocin. Also inhibited by the fluoroquinolones ciprofloxacin and moxifloxacin. A type II topoisomerase that negatively supercoils closed circular double-stranded (ds) DNA in an ATP-dependent manner to modulate DNA topology and maintain chromosomes in an underwound state; also catalyzes the interconversion of other topological isomers of double-stranded DNA rings, including catenanes. At comparable concentrations has a stronger decatenation activity than E.coli, which is inhibited by ciprofloxacin and novobiocin. Cleaves dsDNA at the sequence 5'-AT/GGCC-3', leaving a 4 base overhang. Relaxes negatively supercoiled DNA in an ATP-independent manner. Functionally, negative supercoiling favors strand separation, and DNA replication, transcription, recombination and repair, all of which involve strand separation. Type II topoisomerases break and join 2 DNA strands simultaneously in an ATP-dependent manner. The sequence is that of DNA gyrase subunit A from Mycolicibacterium smegmatis (Mycobacterium smegmatis).